The following is a 920-amino-acid chain: Histone-lysine N-methyltransferase, H3 lysine-4 specific (920 aa).

Positions 94–179 constitute an RRM domain; the sequence is TQVFVSNISP…KPLSVVLDRD (86 aa). Basic and acidic residues predominate over residues 205–216; it reads KQRFEREDESSR. Disordered stretches follow at residues 205 to 242 and 448 to 485; these read KQRF…TLSN and KRVD…YQLN. Polar residues-rich tracts occupy residues 233–242 and 453–462; these read PSKNSQTLSN and SKMNLSAGSK. Residues 463–476 show a composition bias toward basic residues; that stretch reads TKSKLQRRRRRRHE. The short motif at 749–754 is the RxxxRR motif element; sequence RVNNRR. The SET domain occupies 781-898; the sequence is KQLHFGPSRI…HGEELTYDYK (118 aa). Y897 contributes to the S-adenosyl-L-methionine binding site. Residues 904–920 enclose the Post-SET domain; sequence DKIPCLCGAPTCRGYLN.

This sequence belongs to the class V-like SAM-binding methyltransferase superfamily. In terms of assembly, component of the Set1C/COMPASS complex composed of ash2, sdc1, set1, shg1, spp1, swd1, swd2 and swd3.

It localises to the nucleus. The protein localises to the chromosome. The enzyme catalyses L-lysyl(4)-[histone H3] + 3 S-adenosyl-L-methionine = N(6),N(6),N(6)-trimethyl-L-lysyl(4)-[histone H3] + 3 S-adenosyl-L-homocysteine + 3 H(+). It carries out the reaction N(6)-methyl-L-lysyl(4)-[histone H3] + S-adenosyl-L-methionine = N(6),N(6)-dimethyl-L-lysyl(4)-[histone H3] + S-adenosyl-L-homocysteine + H(+). The catalysed reaction is N(6),N(6)-dimethyl-L-lysyl(4)-[histone H3] + S-adenosyl-L-methionine = N(6),N(6),N(6)-trimethyl-L-lysyl(4)-[histone H3] + S-adenosyl-L-homocysteine + H(+). Its function is as follows. Catalytic component of the COMPASS (Set1C) complex that specifically mono-, di- and trimethylates histone H3 to form H3K4me1/2/3. Binds RNA which might negatively affect its histone methyltransferase activity. COMPASS recognizes ubiquitinated H2B on one face of the nucleosome which stimulates the methylation of H3 on the opposing face. Methylation promotes maintenance of active chromatin states at euchromatic chromosomal domains and is present throughout the cell cycle. Plays a role in telomere maintenance and DNA repair in an ATM kinase rad3-dependent pathway. Required for efficient telomeric and centromeric silencing. The chain is Histone-lysine N-methyltransferase, H3 lysine-4 specific from Schizosaccharomyces pombe (strain 972 / ATCC 24843) (Fission yeast).